The sequence spans 112 residues: Putative transmembrane protein ORF112 (112 aa).

Transmembrane regions (helical) follow at residues 26–46 (FWEV…GILV), 50–70 (ILVT…MYLF), and 80–100 (IFFP…LVGV).

The protein resides in the host membrane. The chain is Putative transmembrane protein ORF112 from Acidianus convivator (ABV).